The chain runs to 570 residues: Periplasmic trehalase (570 aa).

An N-terminal signal peptide occupies residues 1-34; the sequence is MIPPEIRRSVLLQKAIKLALAGTLLTFASFSATA. Substrate contacts are provided by residues R159, 166-167, N203, 212-214, 284-286, and G317; these read WD, RSQ, and RPE. Residues D319 and E503 each act as proton donor/acceptor in the active site. Residue E518 coordinates substrate. The interval 544–570 is disordered; the sequence is KPCDSVPSTRPASLSATPTKTPSAATQ. Over residues 554–570 the composition is skewed to low complexity; sequence PASLSATPTKTPSAATQ.

The protein belongs to the glycosyl hydrolase 37 family. Monomer.

The protein resides in the periplasm. It catalyses the reaction alpha,alpha-trehalose + H2O = alpha-D-glucose + beta-D-glucose. In terms of biological role, provides the cells with the ability to utilize trehalose at high osmolarity by splitting it into glucose molecules that can subsequently be taken up by the phosphotransferase-mediated uptake system. The sequence is that of Periplasmic trehalase from Salmonella newport (strain SL254).